We begin with the raw amino-acid sequence, 289 residues long: Phospholipase A1 (289 aa).

Positions 1 to 20 are cleaved as a signal peptide; that stretch reads MRTGPGWLLAAAALPFFACA. Residues 21-52 are Periplasmic-facing; it reads QEATIDKVHDTPAVRGSIIANMLQEHDNPFTL. A beta stranded membrane pass occupies residues 53–65; sequence YPYESNYLLYTYT. Residues 66–84 lie on the Extracellular side of the membrane; the sequence is SDLNKKAIESYNWSDNANK. The beta stranded transmembrane segment at 85–99 threads the bilayer; the sequence is DEVKFQLSLAFPLWR. Over 100 to 105 the chain is Periplasmic; the sequence is GILGDN. Residues 106-118 traverse the membrane as a beta stranded segment; the sequence is SLLGASYTQRSWW. Residues 119-128 are Extracellular-facing; it reads QLSNTGESAP. Serine 126 lines the Ca(2+) pocket. A beta stranded transmembrane segment spans residues 129-148; that stretch reads FRETNYEPQLFLGFATDYSV. Residues 149-150 are Periplasmic-facing; the sequence is GD. A beta stranded transmembrane segment spans residues 151-164; sequence WTLRDAEFGYNHQS. Histidine 162 acts as the Proton acceptor in catalysis. The active-site Nucleophile is serine 164. The Extracellular portion of the chain corresponds to 165–173; the sequence is NGRSDPTSR. The Ca(2+) site is built by arginine 167 and serine 172. The beta stranded transmembrane segment at 174–186 threads the bilayer; sequence SWNRLYSRLMAQN. The Periplasmic portion of the chain corresponds to 187–188; sequence GN. Residues 189–198 form a beta stranded membrane-spanning segment; that stretch reads WLVEVKPWYV. The Extracellular portion of the chain corresponds to 199 to 216; it reads IGDTSDNKNITKYMGYYQ. Aspartate 204 contacts Ca(2+). Residues 217 to 223 form a beta stranded membrane-spanning segment; that stretch reads LKIGYQL. Over 224–225 the chain is Periplasmic; it reads GE. The beta stranded transmembrane segment at 226–234 threads the bilayer; that stretch reads AVLSAKGQY. Topologically, residues 235 to 241 are extracellular; the sequence is NWNTGYG. The beta stranded transmembrane segment at 242 to 250 threads the bilayer; that stretch reads GAELGVSYP. At 251 to 255 the chain is on the periplasmic side; it reads ITKHV. A beta stranded transmembrane segment spans residues 256-265; sequence RFYTQVYSGY. Residues 266–274 lie on the Extracellular side of the membrane; sequence GESLIDYDF. A beta stranded membrane pass occupies residues 275 to 286; the sequence is NQTRVGMGVMLN. At 287 to 289 the chain is on the periplasmic side; that stretch reads DLF.

The protein belongs to the phospholipase A1 family. As to quaternary structure, homodimer; dimerization is reversible, and the dimeric form is the active one. Requires Ca(2+) as cofactor.

The protein resides in the cell outer membrane. It catalyses the reaction a 1,2-diacyl-sn-glycero-3-phosphocholine + H2O = a 2-acyl-sn-glycero-3-phosphocholine + a fatty acid + H(+). The catalysed reaction is a 1,2-diacyl-sn-glycero-3-phosphocholine + H2O = a 1-acyl-sn-glycero-3-phosphocholine + a fatty acid + H(+). In terms of biological role, hydrolysis of phosphatidylcholine with phospholipase A2 (EC 3.1.1.4) and phospholipase A1 (EC 3.1.1.32) activities. In Proteus vulgaris, this protein is Phospholipase A1 (pldA).